A 134-amino-acid polypeptide reads, in one-letter code: Ribosome-binding factor A (134 aa).

This sequence belongs to the RbfA family. As to quaternary structure, monomer. Binds 30S ribosomal subunits, but not 50S ribosomal subunits or 70S ribosomes.

It is found in the cytoplasm. Its function is as follows. One of several proteins that assist in the late maturation steps of the functional core of the 30S ribosomal subunit. Associates with free 30S ribosomal subunits (but not with 30S subunits that are part of 70S ribosomes or polysomes). Required for efficient processing of 16S rRNA. May interact with the 5'-terminal helix region of 16S rRNA. This chain is Ribosome-binding factor A, found in Rhizobium leguminosarum bv. trifolii (strain WSM2304).